The following is a 344-amino-acid chain: Phenylalanine--tRNA ligase alpha subunit (344 aa).

Glutamate 256 is a Mg(2+) binding site.

The protein belongs to the class-II aminoacyl-tRNA synthetase family. Phe-tRNA synthetase alpha subunit type 1 subfamily. As to quaternary structure, tetramer of two alpha and two beta subunits. Requires Mg(2+) as cofactor.

It is found in the cytoplasm. It carries out the reaction tRNA(Phe) + L-phenylalanine + ATP = L-phenylalanyl-tRNA(Phe) + AMP + diphosphate + H(+). The chain is Phenylalanine--tRNA ligase alpha subunit from Shouchella clausii (strain KSM-K16) (Alkalihalobacillus clausii).